A 241-amino-acid chain; its full sequence is 1-(5-phosphoribosyl)-5-[(5-phosphoribosylamino)methylideneamino] imidazole-4-carboxamide isomerase (241 aa).

Residue Asp10 is the Proton acceptor of the active site. Asp131 acts as the Proton donor in catalysis.

It belongs to the HisA/HisF family.

Its subcellular location is the cytoplasm. The enzyme catalyses 1-(5-phospho-beta-D-ribosyl)-5-[(5-phospho-beta-D-ribosylamino)methylideneamino]imidazole-4-carboxamide = 5-[(5-phospho-1-deoxy-D-ribulos-1-ylimino)methylamino]-1-(5-phospho-beta-D-ribosyl)imidazole-4-carboxamide. The protein operates within amino-acid biosynthesis; L-histidine biosynthesis; L-histidine from 5-phospho-alpha-D-ribose 1-diphosphate: step 4/9. In Hyphomonas neptunium (strain ATCC 15444), this protein is 1-(5-phosphoribosyl)-5-[(5-phosphoribosylamino)methylideneamino] imidazole-4-carboxamide isomerase.